Here is a 222-residue protein sequence, read N- to C-terminus: UPF0758 protein Mpe_A2695 (222 aa).

An MPN domain is found at V100–L222. Zn(2+) is bound by residues H171, H173, and D184. The JAMM motif motif lies at H171–D184.

The protein belongs to the UPF0758 family.

The sequence is that of UPF0758 protein Mpe_A2695 from Methylibium petroleiphilum (strain ATCC BAA-1232 / LMG 22953 / PM1).